Reading from the N-terminus, the 465-residue chain is Methionine aminopeptidase 2-2 (465 aa).

The span at 1–13 (MGSKTPNDHRRGP) shows a compositional bias: basic and acidic residues. Residues 1–92 (MGSKTPNDHR…KKKTLLGGLQ (92 aa)) form a disordered region. Positions 44–55 (GETEDGEDEDDD) are enriched in acidic residues. Over residues 71–86 (TKKKNKRKKNKKKKKT) the composition is skewed to basic residues. H217 contacts substrate. 3 residues coordinate a divalent metal cation: D238, D249, and H318. Residue H326 participates in substrate binding. Positions 351 and 446 each coordinate a divalent metal cation.

Belongs to the peptidase M24A family. Methionine aminopeptidase eukaryotic type 2 subfamily. Co(2+) serves as cofactor. Requires Zn(2+) as cofactor. The cofactor is Mn(2+). Fe(2+) is required as a cofactor.

It is found in the cytoplasm. It catalyses the reaction Release of N-terminal amino acids, preferentially methionine, from peptides and arylamides.. In terms of biological role, cotranslationally removes the N-terminal methionine from nascent proteins. The N-terminal methionine is often cleaved when the second residue in the primary sequence is small and uncharged (Met-Ala-, Cys, Gly, Pro, Ser, Thr, or Val). The sequence is that of Methionine aminopeptidase 2-2 from Blastomyces gilchristii (strain SLH14081) (Blastomyces dermatitidis).